A 262-amino-acid chain; its full sequence is ATP synthase subunit a (262 aa).

5 helical membrane passes run 24 to 44, 84 to 104, 129 to 149, 194 to 214, and 228 to 248; these read AVHLDTLFFSLLAGVIFLFVF, VIAPLALTIFCWVFIMNAIDL, DISATLGMSICVFFLILFYTV, LFGNMYAGELIFILIAVMYMA, and LVWAIFHILVITLQAFIFMML.

The protein belongs to the ATPase A chain family. F-type ATPases have 2 components, CF(1) - the catalytic core - and CF(0) - the membrane proton channel. CF(1) has five subunits: alpha(3), beta(3), gamma(1), delta(1), epsilon(1). CF(0) has three main subunits: a(1), b(2) and c(9-12). The alpha and beta chains form an alternating ring which encloses part of the gamma chain. CF(1) is attached to CF(0) by a central stalk formed by the gamma and epsilon chains, while a peripheral stalk is formed by the delta and b chains.

The protein resides in the cell inner membrane. Its function is as follows. Key component of the proton channel; it plays a direct role in the translocation of protons across the membrane. The chain is ATP synthase subunit a from Actinobacillus pleuropneumoniae serotype 3 (strain JL03).